The sequence spans 637 residues: Biosynthetic arginine decarboxylase (637 aa).

An N6-(pyridoxal phosphate)lysine modification is found at Lys101. Residue 286–296 coordinates substrate; sequence VDIGGGLGVDY.

The protein belongs to the Orn/Lys/Arg decarboxylase class-II family. SpeA subfamily. Requires Mg(2+) as cofactor. Pyridoxal 5'-phosphate is required as a cofactor.

It catalyses the reaction L-arginine + H(+) = agmatine + CO2. It functions in the pathway amine and polyamine biosynthesis; agmatine biosynthesis; agmatine from L-arginine: step 1/1. Functionally, catalyzes the biosynthesis of agmatine from arginine. In Marinobacter nauticus (strain ATCC 700491 / DSM 11845 / VT8) (Marinobacter aquaeolei), this protein is Biosynthetic arginine decarboxylase.